The following is a 212-amino-acid chain: Ribonuclease HII (212 aa).

The region spanning 20-209 (TCVVGVDEVG…VHNILYQEAS (190 aa)) is the RNase H type-2 domain. Positions 26, 27, and 117 each coordinate a divalent metal cation.

The protein belongs to the RNase HII family. Requires Mn(2+) as cofactor. Mg(2+) serves as cofactor.

It is found in the cytoplasm. It carries out the reaction Endonucleolytic cleavage to 5'-phosphomonoester.. Its function is as follows. Endonuclease that specifically degrades the RNA of RNA-DNA hybrids. This chain is Ribonuclease HII, found in Cereibacter sphaeroides (strain ATCC 17029 / ATH 2.4.9) (Rhodobacter sphaeroides).